The sequence spans 446 residues: Iroquois homeobox protein 5a (446 aa).

Positions 117-173 (NATRDATATLKAWLNEHRKNPYPTKGEKIMLAIITKMTLTQVSTWFANARRRLKKEN) form a DNA-binding region, homeobox. Residues 175–312 (MTWTPRNRSE…IHSPPSAPKP (138 aa)) are disordered. Over residues 184–201 (EDEEEDENIDLEKNDDDE) the composition is skewed to acidic residues. Basic and acidic residues-rich tracts occupy residues 202-220 (PNKP…DHKL) and 227-258 (PCDR…RTDL). Polar residues-rich tracts occupy residues 264–274 (KPTTSSPSVLQ) and 293–303 (STGNSNVTSVI).

Belongs to the TALE/IRO homeobox family.

The protein resides in the nucleus. Transcription factor. Binds to consensus iroquois binding site (IBS) motifs 5'-ACANNTGT-3' or 5'-ACANNNTGT-3' in regulatory elements of target genes. Required, together with irx7, for hyoid joint formation; they act cell autonomously to repress expression of cartilage matrix genes, such as collagen col2a1a, within immature chondrocytes of the joint interzone. May compete with or modify Sox9a activity, thereby reducing Sox9a-mediated activation of col2a1a. Probably acts in the developing hyoid joint downstream of Bmp signaling. In concert with irx6a, plays a role in visual performance. The chain is Iroquois homeobox protein 5a (irx5a) from Danio rerio (Zebrafish).